A 409-amino-acid polypeptide reads, in one-letter code: MPFRRTLLAASLVLLITGQAPLYAAPPLSMDNGTNALTVQNSNAWVEVSASALQHNIRTLQAELAGKSRLCAVLKADAYGHGIGLVMPSIIAQGVPCVAVASNEEARVVRASGFTGQLVRVRAASLSELEDALQYDMEELVGSAEFARQADAIAARHGKTLRIHLAFNSSGMSRNGVEMATWSGRGEALQITDQKHLELVALMTHFAVEDKDDVRKGLAAFNEQTDWLIKHARLDRSKLTLHAANSFATLEVPEARLDMVRTGGALFGDTVPGRTEYKRAMQFKSRVAAVHSYPAGNTVGYDRTFTLARDSRLANITVGYSDGYRRVFTNKGHVLINGHRVPVVGKVSMNTLMVDVTDFPDVKGGNEVVLFGKQAGGEITQAEMEEINGALLADLYTVWGSSNPKILVD.

The N-terminal stretch at Met-1–Ala-24 is a signal peptide. A disulfide bond links Cys-71 and Cys-97. Catalysis depends on Lys-75, which acts as the Proton acceptor. Lys-75 is subject to N6-(pyridoxal phosphate)lysine. Arg-174 is a substrate binding site. The Proton acceptor role is filled by Tyr-301. Position 349 (Met-349) interacts with substrate.

The protein belongs to the alanine racemase family. Bsr subfamily. As to quaternary structure, monomer. Forms a head-to-tail homodimer in the structure. Requires pyridoxal 5'-phosphate as cofactor.

It is found in the periplasm. The enzyme catalyses an L-alpha-amino acid = a D-alpha-amino acid. The catalysed reaction is L-lysine = D-lysine. It catalyses the reaction L-arginine = D-arginine. It carries out the reaction L-alanine = D-alanine. With respect to regulation, activity is enhanced by Co(2+), Mn(2+) and Sr(2+), and decreased by Cu(2+). Functionally, amino-acid racemase that catalyzes the interconversion of L-lysine and D-lysine, and L-arginine and D-arginine. To a lesser extent, is also able to interconvert alanine and isoleucine enantiomers. The polypeptide is Broad specificity amino-acid racemase (Pseudomonas putida (Arthrobacter siderocapsulatus)).